We begin with the raw amino-acid sequence, 130 residues long: Small ribosomal subunit protein bS6 (130 aa).

The disordered stretch occupies residues 96–130 (VTEASPMAKARDERDSRRSPSDDRIEEESAEENAE). Basic and acidic residues predominate over residues 104 to 118 (KARDERDSRRSPSDD). Residues 119 to 130 (RIEEESAEENAE) show a composition bias toward acidic residues.

This sequence belongs to the bacterial ribosomal protein bS6 family.

Binds together with bS18 to 16S ribosomal RNA. The polypeptide is Small ribosomal subunit protein bS6 (Shewanella denitrificans (strain OS217 / ATCC BAA-1090 / DSM 15013)).